The sequence spans 166 residues: MFPMVTEFMNYGQQTVRAARYIGQGFMITLSHANRLPVTIQYPYEKLITSERFRGRIHFEFDKCIACEVCVRVCPIDLPVVDWKLETDIRKKRLLNYSIDFGICIFCGNCVEYCPTNCLSMTEEYELSTYDRHELNYNQIALGRLPMSILDDYTIRTILNLPERKT.

4Fe-4S ferredoxin-type domains are found at residues 55–84 (GRIH…VDWK) and 95–124 (LNYS…MTEE). Positions 64, 67, 70, 74, 104, 107, 110, and 114 each coordinate [4Fe-4S] cluster.

Belongs to the complex I 23 kDa subunit family. In terms of assembly, NDH is composed of at least 16 different subunits, 5 of which are encoded in the nucleus. [4Fe-4S] cluster is required as a cofactor.

The protein localises to the plastid. Its subcellular location is the chloroplast thylakoid membrane. The enzyme catalyses a plastoquinone + NADH + (n+1) H(+)(in) = a plastoquinol + NAD(+) + n H(+)(out). The catalysed reaction is a plastoquinone + NADPH + (n+1) H(+)(in) = a plastoquinol + NADP(+) + n H(+)(out). In terms of biological role, NDH shuttles electrons from NAD(P)H:plastoquinone, via FMN and iron-sulfur (Fe-S) centers, to quinones in the photosynthetic chain and possibly in a chloroplast respiratory chain. The immediate electron acceptor for the enzyme in this species is believed to be plastoquinone. Couples the redox reaction to proton translocation, and thus conserves the redox energy in a proton gradient. The sequence is that of NAD(P)H-quinone oxidoreductase subunit I, chloroplastic from Chaetymenia peduncularis (Daisy).